Here is a 103-residue protein sequence, read N- to C-terminus: Secreted Ly-6/uPAR-related protein 1 (103 aa).

The signal sequence occupies residues 1–22; sequence MASRWAVQLLLVAAWSMGCGEA. Residues 24-73 form the UPAR/Ly6 domain; that stretch reads KCYTCKEPMTSASCRTITRCKPEDTACMTTLVTVEAEYPFNQSPVVTRSC. Intrachain disulfides connect C25-C50, C28-C37, C43-C73, C77-C93, and C94-C99.

As to quaternary structure, homodimer. Interacts with PLAU. Interacts with CHRNA7. As to expression, granulocytes. Expressed in skin. Predominantly expressed in the granular layer of skin, notably the acrosyringium. Identified in several biological fluids such as sweat, saliva, tears, plasma and urine.

Its subcellular location is the secreted. Its function is as follows. Has an antitumor activity. Was found to be a marker of late differentiation of the skin. Implicated in maintaining the physiological and structural integrity of the keratinocyte layers of the skin. In vitro down-regulates keratinocyte proliferation; the function may involve the proposed role as modulator of nicotinic acetylcholine receptors (nAChRs) activity. In vitro inhibits alpha-7-dependent nAChR currents in an allosteric manner. In T cells may be involved in regulation of intracellular Ca(2+) signaling. Seems to have an immunomodulatory function in the cornea. The function may implicate a possible role as a scavenger receptor for PLAU thereby blocking PLAU-dependent functions of PLAUR such as in cell migration and proliferation. The chain is Secreted Ly-6/uPAR-related protein 1 (SLURP1) from Homo sapiens (Human).